The chain runs to 168 residues: NADH-ubiquinone oxidoreductase chain 6 (168 aa).

Transmembrane regions (helical) follow at residues 1–21 (MKMMTIYIISLLLMIGFVAFA), 27–47 (IYGGLSLVVSGGLGCGMVVSL), 50–70 (VFLGLVVFLVYLGGMLVVFGY), 87–107 (VVAFIMLLFVLLLQVGWYFMS), and 143–163 (WALALLGWILFMTIYVVLEVV).

This sequence belongs to the complex I subunit 6 family. Core subunit of respiratory chain NADH dehydrogenase (Complex I) which is composed of 45 different subunits.

The protein resides in the mitochondrion inner membrane. It carries out the reaction a ubiquinone + NADH + 5 H(+)(in) = a ubiquinol + NAD(+) + 4 H(+)(out). Its function is as follows. Core subunit of the mitochondrial membrane respiratory chain NADH dehydrogenase (Complex I) which catalyzes electron transfer from NADH through the respiratory chain, using ubiquinone as an electron acceptor. Essential for the catalytic activity and assembly of complex I. The chain is NADH-ubiquinone oxidoreductase chain 6 (MT-ND6) from Didelphis virginiana (North American opossum).